The chain runs to 318 residues: Mitochondrial thiamine pyrophosphate carrier (318 aa).

3 Solcar repeats span residues 13–106 (NSKL…LTEL), 116–202 (HQFS…LKRA), and 214–309 (TGNL…FCNL). The next 5 helical transmembrane spans lie at 19-39 (AVAG…LDVI), 87-107 (ILSI…TELL), 122-142 (FVCG…VDVL), 173-193 (VFYK…GLQF), and 220-240 (LLCG…LDLI). Residues 241-246 (KKRLQV) carry the Substrate recognition motif. A helical transmembrane segment spans residues 293–313 (ALSTGFMFFWYELFCNLFHCI).

It belongs to the mitochondrial carrier (TC 2.A.29) family.

The protein localises to the mitochondrion membrane. The catalysed reaction is thiamine phosphate(out) + thiamine diphosphate(in) = thiamine phosphate(in) + thiamine diphosphate(out). Mitochondrial transporter mediating uptake of thiamine diphosphate into mitochondria. It is not clear if the antiporter activity is affected by the membrane potential or by the proton electrochemical gradient. In Mus musculus (Mouse), this protein is Mitochondrial thiamine pyrophosphate carrier (Slc25a19).